The following is a 369-amino-acid chain: 2-aminoethylphosphonate--pyruvate transaminase (369 aa).

Position 193 is an N6-(pyridoxal phosphate)lysine (Lys193).

It belongs to the class-V pyridoxal-phosphate-dependent aminotransferase family. PhnW subfamily. Homodimer. It depends on pyridoxal 5'-phosphate as a cofactor.

It carries out the reaction (2-aminoethyl)phosphonate + pyruvate = phosphonoacetaldehyde + L-alanine. In terms of biological role, involved in phosphonate degradation. The polypeptide is 2-aminoethylphosphonate--pyruvate transaminase (Burkholderia pseudomallei (strain 668)).